The sequence spans 360 residues: Phospho-N-acetylmuramoyl-pentapeptide-transferase (360 aa).

10 helical membrane-spanning segments follow: residues 25–45 (RAIL…PWVI), 73–93 (TMGG…WADL), 97–117 (YVLA…VDDY), 132–152 (WKYF…FVTA), 168–188 (VAWQ…VGFS), 199–219 (GLAI…AYLV), 236–256 (SGEL…FLWF), 263–283 (VFMG…IAVI), 288–308 (IVFF…ILQV), and 339–359 (IVRF…TLKI).

It belongs to the glycosyltransferase 4 family. MraY subfamily. Requires Mg(2+) as cofactor.

The protein localises to the cell inner membrane. The catalysed reaction is UDP-N-acetyl-alpha-D-muramoyl-L-alanyl-gamma-D-glutamyl-meso-2,6-diaminopimeloyl-D-alanyl-D-alanine + di-trans,octa-cis-undecaprenyl phosphate = di-trans,octa-cis-undecaprenyl diphospho-N-acetyl-alpha-D-muramoyl-L-alanyl-D-glutamyl-meso-2,6-diaminopimeloyl-D-alanyl-D-alanine + UMP. The protein operates within cell wall biogenesis; peptidoglycan biosynthesis. Its function is as follows. Catalyzes the initial step of the lipid cycle reactions in the biosynthesis of the cell wall peptidoglycan: transfers peptidoglycan precursor phospho-MurNAc-pentapeptide from UDP-MurNAc-pentapeptide onto the lipid carrier undecaprenyl phosphate, yielding undecaprenyl-pyrophosphoryl-MurNAc-pentapeptide, known as lipid I. This is Phospho-N-acetylmuramoyl-pentapeptide-transferase from Teredinibacter turnerae (strain ATCC 39867 / T7901).